The primary structure comprises 457 residues: Chromosomal replication initiator protein DnaA (457 aa).

Residues 1–75 are domain I, interacts with DnaA modulators; it reads MDAQLNNLWE…ALKIVTSRKF (75 aa). The interval 75–118 is domain II; the sequence is FKIEFYLESDLEEEKENEEKQKEEKKDNTNDVDGSIVVSDEMSA. The segment at 87–108 is disordered; that stretch reads EEKENEEKQKEEKKDNTNDVDG. Positions 91–103 are enriched in basic and acidic residues; it reads NEEKQKEEKKDNT. The segment at 119–335 is domain III, AAA+ region; that stretch reads TLNPKYTFQS…GALIRIIAYS (217 aa). ATP-binding residues include Gly-163, Gly-165, Lys-166, and Thr-167. The interval 336-457 is domain IV, binds dsDNA; that stretch reads SLTNRDVSVD…NDITKKLTQK (122 aa).

The protein belongs to the DnaA family. In terms of assembly, oligomerizes as a right-handed, spiral filament on DNA at oriC.

The protein localises to the cytoplasm. Functionally, plays an essential role in the initiation and regulation of chromosomal replication. ATP-DnaA binds to the origin of replication (oriC) to initiate formation of the DNA replication initiation complex once per cell cycle. Binds the DnaA box (a 9 base pair repeat at the origin) and separates the double-stranded (ds)DNA. Forms a right-handed helical filament on oriC DNA; dsDNA binds to the exterior of the filament while single-stranded (ss)DNA is stabiized in the filament's interior. The ATP-DnaA-oriC complex binds and stabilizes one strand of the AT-rich DNA unwinding element (DUE), permitting loading of DNA polymerase. After initiation quickly degrades to an ADP-DnaA complex that is not apt for DNA replication. Binds acidic phospholipids. This Clostridium perfringens (strain SM101 / Type A) protein is Chromosomal replication initiator protein DnaA.